We begin with the raw amino-acid sequence, 305 residues long: Mat- sexual cell fertilization-promoting factor (305 aa).

Positions P38–R93 form a DNA-binding region, alpha box.

This sequence belongs to the MATALPHA1 family.

It localises to the nucleus. Controls fertilization, probably by determining the mating type. May be involved in the post-fertilization steps of the sexual cycle besides mat+. It is required for the developmental events that occur in the female organ after fertilization. The sequence is that of Mat- sexual cell fertilization-promoting factor (FMR1) from Podospora anserina (Pleurage anserina).